A 65-amino-acid chain; its full sequence is Large ribosomal subunit protein bL35 (65 aa).

The protein belongs to the bacterial ribosomal protein bL35 family.

The polypeptide is Large ribosomal subunit protein bL35 (Buchnera aphidicola subsp. Cinara cedri (strain Cc)).